Reading from the N-terminus, the 361-residue chain is 3-dehydroquinate synthase (361 aa).

NAD(+) is bound by residues 105-109 (GVIGD), 129-130 (TT), K142, K151, and 169-172 (FLST). Residues E184, H247, and H264 each contribute to the Zn(2+) site.

This sequence belongs to the sugar phosphate cyclases superfamily. Dehydroquinate synthase family. Co(2+) is required as a cofactor. Requires Zn(2+) as cofactor. The cofactor is NAD(+).

The protein localises to the cytoplasm. It carries out the reaction 7-phospho-2-dehydro-3-deoxy-D-arabino-heptonate = 3-dehydroquinate + phosphate. It participates in metabolic intermediate biosynthesis; chorismate biosynthesis; chorismate from D-erythrose 4-phosphate and phosphoenolpyruvate: step 2/7. In terms of biological role, catalyzes the conversion of 3-deoxy-D-arabino-heptulosonate 7-phosphate (DAHP) to dehydroquinate (DHQ). This chain is 3-dehydroquinate synthase, found in Endomicrobium trichonymphae.